Reading from the N-terminus, the 86-residue chain is Large ribosomal subunit protein eL20 (86 aa).

The protein belongs to the eukaryotic ribosomal protein eL20 family. As to quaternary structure, part of the 50S ribosomal subunit. Binds 23S rRNA.

The protein is Large ribosomal subunit protein eL20 of Saccharolobus solfataricus (strain ATCC 35092 / DSM 1617 / JCM 11322 / P2) (Sulfolobus solfataricus).